Here is a 122-residue protein sequence, read N- to C-terminus: Ribosome-binding factor A (122 aa).

The protein belongs to the RbfA family. In terms of assembly, monomer. Binds 30S ribosomal subunits, but not 50S ribosomal subunits or 70S ribosomes.

Its subcellular location is the cytoplasm. Its function is as follows. One of several proteins that assist in the late maturation steps of the functional core of the 30S ribosomal subunit. Associates with free 30S ribosomal subunits (but not with 30S subunits that are part of 70S ribosomes or polysomes). Required for efficient processing of 16S rRNA. May interact with the 5'-terminal helix region of 16S rRNA. The chain is Ribosome-binding factor A from Burkholderia thailandensis (strain ATCC 700388 / DSM 13276 / CCUG 48851 / CIP 106301 / E264).